We begin with the raw amino-acid sequence, 294 residues long: Acetyl-coenzyme A carboxylase carboxyl transferase subunit beta (294 aa).

Residues 30–294 (IMTKCPECKK…PEVGGEADGE (265 aa)) enclose the CoA carboxyltransferase N-terminal domain. Residues Cys-34, Cys-37, Cys-53, and Cys-56 each coordinate Zn(2+). The C4-type zinc finger occupies 34–56 (CPECKKIMYTKELQKNLMVCNYC).

This sequence belongs to the AccD/PCCB family. Acetyl-CoA carboxylase is a heterohexamer composed of biotin carboxyl carrier protein (AccB), biotin carboxylase (AccC) and two subunits each of ACCase subunit alpha (AccA) and ACCase subunit beta (AccD). The cofactor is Zn(2+).

Its subcellular location is the cytoplasm. It carries out the reaction N(6)-carboxybiotinyl-L-lysyl-[protein] + acetyl-CoA = N(6)-biotinyl-L-lysyl-[protein] + malonyl-CoA. The protein operates within lipid metabolism; malonyl-CoA biosynthesis; malonyl-CoA from acetyl-CoA: step 1/1. In terms of biological role, component of the acetyl coenzyme A carboxylase (ACC) complex. Biotin carboxylase (BC) catalyzes the carboxylation of biotin on its carrier protein (BCCP) and then the CO(2) group is transferred by the transcarboxylase to acetyl-CoA to form malonyl-CoA. In Listeria monocytogenes serotype 4a (strain HCC23), this protein is Acetyl-coenzyme A carboxylase carboxyl transferase subunit beta.